Here is an 803-residue protein sequence, read N- to C-terminus: MDDIVMNGSPEVPPPQPPPEPVERPPTPPPPPPEESVAPPPPPEVVAPPPPPEDLPPAPPPPEPKKKKVGWGAKKPAATPLSVEELVRKKREADAAAARPKFLSRAERERIALEKRAKEVEAERRLKASNGVDRSATQSPSVSSEVNHSDGRTIPTGPRAMRSSDTPTAPAAMRNSHSHNKNRDLSPPPPPKSMSFGLASSKGDKRPVDDDEVAAQVALVKQRYMGADQTSTFSAKKKRKRTTDRKFNFEWNAEEDTSGDYNPLYQHRHEANFFGRGRLAGFGDDVADNVAKKYARALEDRDHEAGGIRAREILEMERRRREESTRNQLDKHWSEKKLEHMRERDWRIFKEDFNISTKGGSVPNPMRSWDESGLPKRLMELVNKVGYKEPTPIQRAAIPIAMQSRDLIGVAVTGSGKTASFLLPLLVYIAELPRIDEFEWRKNDGPYAIVLAPTRELAQQIEIEAKKFTEPLGFNVVSIVGGHSFEEQAYSLRNGAEIIIATPGRLVDCIERRMLVLSQCCYVIMDEADRMIDLGFEEPVNKILDALPVSNEKPDSEEAENSMAMSQHIGTKDRYRQTMMYTATMPTAVERIARKYLRRPAIVTIGSAGEAVDTVEQRVEFIAGEDKRKKRLGDILSSGEFRPPIIVFVNIKRNCDAIAREIKQWGFSSVTLHGSKTQEQREAALASVRNGQTDVLVATDLAGRGIDVPDVSLVINFNMATTIESYTHRIGRTGRAGKSGVAITFLGNEDTDVMYDLKQMIMKSSISRLPEELRKHEAAQSKPTRGFAKKNDDNSAFGSKGGW.

Disordered regions lie at residues 1–83 (MDDI…PLSV) and 115–210 (KRAK…PVDD). Over residues 11–62 (EVPPPQPPPEPVERPPTPPPPPPEESVAPPPPPEVVAPPPPPEDLPPAPPPP) the composition is skewed to pro residues. Residues 115 to 126 (KRAKEVEAERRL) show a composition bias toward basic and acidic residues. The span at 135 to 146 (SATQSPSVSSEV) shows a compositional bias: polar residues. Positions 367–395 (RSWDESGLPKRLMELVNKVGYKEPTPIQR) match the Q motif motif. The Helicase ATP-binding domain occupies 398 to 603 (IPIAMQSRDL…RKYLRRPAIV (206 aa)). 411–418 (AVTGSGKT) is a binding site for ATP. Positions 526–529 (DEAD) match the DEAD box motif. Residues 614-777 (TVEQRVEFIA…RLPEELRKHE (164 aa)) enclose the Helicase C-terminal domain. The disordered stretch occupies residues 773–803 (LRKHEAAQSKPTRGFAKKNDDNSAFGSKGGW).

It belongs to the DEAD box helicase family. DDX23/PRP28 subfamily. Component of the U5 snRNP complex.

It localises to the cytoplasm. The protein resides in the nucleus. The catalysed reaction is ATP + H2O = ADP + phosphate + H(+). ATP-dependent RNA helicase involved in mRNA splicing. May destabilize the U1/5'-splice site duplex to permit an effective competition for the 5'-splice site by the U6 snRNA, resulting in the switch between U1 and U6 at the 5'-splice site. May also act to unwind the U4/U6 base-pairing interaction in the U4/U6/U5 snRNP, facilitating the first covalent step of splicing. In Aspergillus oryzae (strain ATCC 42149 / RIB 40) (Yellow koji mold), this protein is Pre-mRNA-splicing ATP-dependent RNA helicase prp28 (prp28).